The sequence spans 59 residues: UPF0434 protein Rsph17025_2896 (59 aa).

The protein belongs to the UPF0434 family.

This Cereibacter sphaeroides (strain ATCC 17025 / ATH 2.4.3) (Rhodobacter sphaeroides) protein is UPF0434 protein Rsph17025_2896.